We begin with the raw amino-acid sequence, 149 residues long: Large ribosomal subunit protein uL13 (149 aa).

This sequence belongs to the universal ribosomal protein uL13 family. Part of the 50S ribosomal subunit.

Functionally, this protein is one of the early assembly proteins of the 50S ribosomal subunit, although it is not seen to bind rRNA by itself. It is important during the early stages of 50S assembly. The polypeptide is Large ribosomal subunit protein uL13 (Thermobifida fusca (strain YX)).